A 162-amino-acid chain; its full sequence is 2-C-methyl-D-erythritol 2,4-cyclodiphosphate synthase (162 aa).

The a divalent metal cation site is built by Asp10 and His12. Residues 10 to 12 (DVH) and 36 to 37 (HS) contribute to the 4-CDP-2-C-methyl-D-erythritol 2-phosphate site. His44 contacts a divalent metal cation. 4-CDP-2-C-methyl-D-erythritol 2-phosphate is bound by residues 58–60 (DIG), 63–67 (FPDTD), and Arg144.

It belongs to the IspF family. As to quaternary structure, homotrimer. A divalent metal cation is required as a cofactor.

It carries out the reaction 4-CDP-2-C-methyl-D-erythritol 2-phosphate = 2-C-methyl-D-erythritol 2,4-cyclic diphosphate + CMP. Its pathway is isoprenoid biosynthesis; isopentenyl diphosphate biosynthesis via DXP pathway; isopentenyl diphosphate from 1-deoxy-D-xylulose 5-phosphate: step 4/6. Functionally, involved in the biosynthesis of isopentenyl diphosphate (IPP) and dimethylallyl diphosphate (DMAPP), two major building blocks of isoprenoid compounds. Catalyzes the conversion of 4-diphosphocytidyl-2-C-methyl-D-erythritol 2-phosphate (CDP-ME2P) to 2-C-methyl-D-erythritol 2,4-cyclodiphosphate (ME-CPP) with a corresponding release of cytidine 5-monophosphate (CMP). The polypeptide is 2-C-methyl-D-erythritol 2,4-cyclodiphosphate synthase (Laribacter hongkongensis (strain HLHK9)).